The sequence spans 156 residues: Ribosomal RNA large subunit methyltransferase H (156 aa).

S-adenosyl-L-methionine is bound by residues leucine 73, glycine 104, and isoleucine 123–leucine 128.

It belongs to the RNA methyltransferase RlmH family. In terms of assembly, homodimer.

Its subcellular location is the cytoplasm. It catalyses the reaction pseudouridine(1915) in 23S rRNA + S-adenosyl-L-methionine = N(3)-methylpseudouridine(1915) in 23S rRNA + S-adenosyl-L-homocysteine + H(+). Specifically methylates the pseudouridine at position 1915 (m3Psi1915) in 23S rRNA. In Burkholderia ambifaria (strain MC40-6), this protein is Ribosomal RNA large subunit methyltransferase H.